Here is a 192-residue protein sequence, read N- to C-terminus: Flavin prenyltransferase UbiX (192 aa).

FMN-binding positions include 10-12 (GAS), serine 36, 92-95 (SVAT), and arginine 127. Tyrosine 157 and lysine 173 together coordinate dimethylallyl phosphate.

Belongs to the UbiX/PAD1 family.

The enzyme catalyses dimethylallyl phosphate + FMNH2 = prenylated FMNH2 + phosphate. Its function is as follows. Flavin prenyltransferase that catalyzes the synthesis of the prenylated FMN cofactor (prenyl-FMN) for 4-hydroxy-3-polyprenylbenzoic acid decarboxylase UbiD. The prenyltransferase is metal-independent and links a dimethylallyl moiety from dimethylallyl monophosphate (DMAP) to the flavin N5 and C6 atoms of FMN. In Chlamydia muridarum (strain MoPn / Nigg), this protein is Flavin prenyltransferase UbiX.